Reading from the N-terminus, the 963-residue chain is Putative RNA Helicase B962L (963 aa).

One can recognise a Helicase ATP-binding domain in the interval Ile43–Leu229. Residue Ser56–Ser63 coordinates ATP. A DEAH box motif is present at residues Asp167–His170. The Helicase C-terminal domain occupies Ala253–Phe459. A helical transmembrane segment spans residues Gly521–Val541.

This sequence belongs to the DEAD box helicase family. DEAH subfamily.

The protein localises to the host membrane. Its subcellular location is the virion. It catalyses the reaction ATP + H2O = ADP + phosphate + H(+). This is Putative RNA Helicase B962L from African swine fever virus (isolate Tick/Malawi/Lil 20-1/1983) (ASFV).